The primary structure comprises 292 residues: tRNA (guanine-N(1)-)-methyltransferase (292 aa).

S-adenosyl-L-methionine-binding positions include Gly-151 and 175–180 (IGDYVL).

It belongs to the RNA methyltransferase TrmD family. Homodimer.

The protein resides in the cytoplasm. It catalyses the reaction guanosine(37) in tRNA + S-adenosyl-L-methionine = N(1)-methylguanosine(37) in tRNA + S-adenosyl-L-homocysteine + H(+). Its function is as follows. Specifically methylates guanosine-37 in various tRNAs. In Corynebacterium diphtheriae (strain ATCC 700971 / NCTC 13129 / Biotype gravis), this protein is tRNA (guanine-N(1)-)-methyltransferase.